The following is a 278-amino-acid chain: N-terminal Xaa-Pro-Lys N-methyltransferase 2 (278 aa).

Residues G123, R128, D145, 174-175 (LQ), Q190, and H195 contribute to the S-adenosyl-L-methionine site.

Belongs to the methyltransferase superfamily. NTM1 family.

The protein localises to the nucleus. It carries out the reaction N-terminal L-alanyl-L-prolyl-L-lysyl-[protein] + S-adenosyl-L-methionine = N-terminal N-methyl-L-alanyl-L-prolyl-L-lysyl-[protein] + S-adenosyl-L-homocysteine + H(+). The enzyme catalyses N-terminal L-prolyl-L-prolyl-L-lysyl-[protein] + S-adenosyl-L-methionine = N-terminal N-methyl-L-prolyl-L-prolyl-L-lysyl-[protein] + S-adenosyl-L-homocysteine + H(+). The catalysed reaction is N-terminal L-seryl-L-prolyl-L-lysyl-[protein] + S-adenosyl-L-methionine = N-terminal N-methyl-L-seryl-L-prolyl-L-lysyl-[protein] + S-adenosyl-L-homocysteine + H(+). In terms of biological role, alpha N-methyltransferase that methylates the N-terminus of target proteins containing the N-terminal motif [Ala/Pro/Ser]-Pro-Lys when the initiator Met is cleaved. Specifically catalyzes monomethylation of exposed alpha-amino group of Ala or Ser residue in the [Ala/Ser]-Pro-Lys motif and Pro in the Pro-Pro-Lys motif. Predominantly functions as a mono-methyltransferase but is also able to di-/tri-methylate the GPKRIA peptide and di-methylate the PPKRIA peptide (in vitro). May activate NTMT1 by priming its substrates for trimethylation. The protein is N-terminal Xaa-Pro-Lys N-methyltransferase 2 (ntmt2) of Danio rerio (Zebrafish).